A 329-amino-acid polypeptide reads, in one-letter code: Flotillin-like protein FloA (329 aa).

The next 2 membrane-spanning stretches (helical) occupy residues 6–26 and 27–47; these read FIVIAVIIVVALLILFSFVPI and GLWISALAAGVHVGIGTLVGM.

This sequence belongs to the flotillin-like FloA family. Homooligomerizes.

The protein resides in the cell membrane. It localises to the membrane raft. In terms of biological role, found in functional membrane microdomains (FMM) that may be equivalent to eukaryotic membrane rafts. FMMs are highly dynamic and increase in number as cells age. Flotillins are thought to be important factors in membrane fluidity. This Staphylococcus aureus (strain USA300) protein is Flotillin-like protein FloA.